Reading from the N-terminus, the 35-residue chain is uncharacterized protein (35 aa).

A signal peptide spans 1-18 (MRSLVFVQLSLLSWEIFC).

This is an uncharacterized protein from Saccharomyces cerevisiae (strain ATCC 204508 / S288c) (Baker's yeast).